Consider the following 1704-residue polypeptide: ABC transporter ced-7 (1704 aa).

A helical transmembrane segment spans residues 23-43; that stretch reads VWTLFELIIPCLLLGPLVYLV. N-linked (GlcNAc...) asparagine glycosylation is found at N126 and N145. 3 consecutive transmembrane segments (helical) span residues 256–276, 306–326, and 334–354; these read AFID…VIHI, VVMA…PLTF, and AALI…GAFV. An N-linked (GlcNAc...) asparagine glycan is attached at N359. Transmembrane regions (helical) follow at residues 362 to 382 and 389 to 409; these read NSAI…SYKL and ISSC…AVEA. 2 N-linked (GlcNAc...) asparagine glycosylation sites follow: N421 and N427. Residues 436–456 form a helical membrane-spanning segment; it reads GWALVMMIVDILWMSIGALVV. A glycan (N-linked (GlcNAc...) asparagine) is linked at N481. The disordered stretch occupies residues 511–536; it reads NPMASTSLNPPNADSDSLLEGSTEAD. Positions 512 to 525 are enriched in polar residues; the sequence is PMASTSLNPPNADS. In terms of domain architecture, ABC transporter 1 spans 546–777; it reads IIVRNLVKIW…FGTGYLLTVV (232 aa). Residue 580-587 participates in ATP binding; the sequence is GHNGAGKS. N-linked (GlcNAc...) asparagine glycans are attached at residues N678, N727, and N899. Polar residues-rich tracts occupy residues 888 to 902 and 911 to 921; these read RQNS…NASE and DTQSSTKSADS. The interval 888 to 933 is disordered; it reads RQNSRISHNSRNASEPSLKPAGYDTQSSTKSADSYQKLMDSQARGP. Residues 963–983 traverse the membrane as a helical segment; the sequence is LFTQVLIPIILLGLVGSLTTL. N-linked (GlcNAc...) asparagine glycans are attached at residues N986, N1012, and N1045. Transmembrane regions (helical) follow at residues 1126-1146, 1153-1173, 1176-1196, 1201-1221, 1234-1254, 1266-1286, and 1311-1331; these read LAPM…MFLI, FAHQ…ASLI, GILY…FHWM, AIVI…IYAV, LLII…FLIF, ILVN…AIIT, and LMGT…FKFV. Residues 1379-1603 enclose the ABC transporter 2 domain; that stretch reads LVIKDLTKTF…YGNNYTMTLS (225 aa). Residue 1411-1418 coordinates ATP; it reads GVNGAGKT. 2 N-linked (GlcNAc...) asparagine glycosylation sites follow: N1597 and N1632.

It belongs to the ABC transporter superfamily. ABCA family. As to expression, ubiquitous in embryos. Expressed in larval germline precursors. Expression in larvae and adults is seen in amphid sheath cells, pharyngeal-intestinal valve and phasmid sheath cells. Low levels of expression are also seen in gonadal sheath cells.

Its subcellular location is the membrane. Functionally, functions in the engulfment of cell corpses during embryonic programmed cell death to translocate molecules that mediate homotypic adhesion between cell surfaces of the dying and engulfing cells. This is ABC transporter ced-7 (ced-7) from Caenorhabditis elegans.